Here is a 148-residue protein sequence, read N- to C-terminus: MVEWTDAERTAILGLWGKLNIDEIGPQALSRCLIVYPWTQRYFATFGNLSSPAAIMGNPKVAAHGRTVMGGLERAIKNMDNIKNTYAALSVMHSEKLHVDPDNFKLLADCITVCAAMKFGQAGFNADIQEAWQKFLAVVVSALCRQYH.

Positions 3-148 (EWTDAERTAI…VVSALCRQYH (146 aa)) constitute a Globin domain. Residues His-64 and His-93 each contribute to the heme b site.

As to quaternary structure, heterotetramer of two alpha chains and two beta chains. In terms of tissue distribution, red blood cells.

Its function is as follows. Involved in oxygen transport from gills to the various peripheral tissues. This is Hemoglobin subunit beta-2 (ba2) from Danio rerio (Zebrafish).